A 405-amino-acid polypeptide reads, in one-letter code: Acetate kinase (405 aa).

Residue Asn-13 participates in Mg(2+) binding. An ATP-binding site is contributed by Lys-20. Residue Arg-94 coordinates substrate. Asp-153 functions as the Proton donor/acceptor in the catalytic mechanism. ATP-binding positions include 213 to 217 (HLGNG), 288 to 290 (DFR), and 336 to 340 (GIGEN). Residue Glu-390 coordinates Mg(2+).

Belongs to the acetokinase family. As to quaternary structure, homodimer. The cofactor is Mg(2+). Mn(2+) serves as cofactor.

The protein resides in the cytoplasm. It catalyses the reaction acetate + ATP = acetyl phosphate + ADP. The protein operates within metabolic intermediate biosynthesis; acetyl-CoA biosynthesis; acetyl-CoA from acetate: step 1/2. In terms of biological role, catalyzes the formation of acetyl phosphate from acetate and ATP. Can also catalyze the reverse reaction. The polypeptide is Acetate kinase (Buchnera aphidicola subsp. Acyrthosiphon pisum (strain APS) (Acyrthosiphon pisum symbiotic bacterium)).